The sequence spans 93 residues: Small ribosomal subunit protein uS19 (93 aa).

Belongs to the universal ribosomal protein uS19 family.

Its function is as follows. Protein S19 forms a complex with S13 that binds strongly to the 16S ribosomal RNA. In Leuconostoc citreum (strain KM20), this protein is Small ribosomal subunit protein uS19.